Here is a 485-residue protein sequence, read N- to C-terminus: WAS/WASL-interacting protein family member 3 (485 aa).

The segment covering 1–41 (MPVPPPPPPPPPPPPPPPPPLGAPPPPPLGAPPPPPPPGPP) has biased composition (pro residues). A disordered region spans residues 1 to 485 (MPVPPPPPPP…QLSLKALPVR (485 aa)). Short sequence motifs (profilin-binding motif) lie at residues 3–8 (VPPPPP), 11–16 (PPPPPP), and 31–36 (APPPPP). Positions 56–73 (GRSALLADIQQGTRLRKV) constitute a WH2 domain. R57 bears the Asymmetric dimethylarginine mark. The short motif at 69–72 (RLRK) is the RLRK element. Residue S161 is modified to Phosphoserine. Pro residues predominate over residues 176 to 203 (PVPPRPSVPAPPPPTPPPPPPPPLPPAS). The residue at position 211 (S211) is a Phosphoserine. Residues 212–246 (PPAPPTKVNPSVVPPPLPCAPPLPPPPPTPPPLPP) are compositionally biased toward pro residues. The span at 247–262 (ASALSDKAVRPQLAPL) shows a compositional bias: low complexity. Composition is skewed to pro residues over residues 263-278 (HLPP…PPCG) and 296-312 (PPAP…PPLP). Residue S392 is modified to Phosphoserine. A compositionally biased stretch (polar residues) spans 392-405 (SPTTELSSKSQQPG). The segment covering 415–439 (AIDDFESKFTFHSMEDFPPPDEYKP) has biased composition (basic and acidic residues). Positions 424–448 (TFHSMEDFPPPDEYKPCQKIYPSKV) match the WASP-binding motif motif.

As to quaternary structure, interacts with WASL, and monomeric and filamentous actin. Isoform 1 is expressed in brain and testis and isoform 2 is expressed only in brain (at protein level).

It localises to the cytoplasm. In terms of biological role, may be a regulator of cytoskeletal organization (Potential). May have a role in spermatogenesis. This chain is WAS/WASL-interacting protein family member 3 (Wipf3), found in Mus musculus (Mouse).